The chain runs to 428 residues: Arabinosyltransferase RRA2 (428 aa).

Topologically, residues 1–15 (MAGRRDRIQQLRGSR) are cytoplasmic. A helical; Signal-anchor for type II membrane protein transmembrane segment spans residues 16–36 (IAIAIFVGILIGCVCSVLFPN). At 37–428 (GFFNSGSSLI…ALDSFPDGSD (392 aa)) the chain is on the lumenal side. A DXD motif motif is present at residues 250-252 (DVD). N-linked (GlcNAc...) asparagine glycosylation is present at Asn278.

This sequence belongs to the glycosyltransferase 77 family. Expressed in roots, rosette and cauline leaves, stems, flowers and siliques.

The protein resides in the golgi apparatus membrane. Its function is as follows. Plays a role in the arabinosylation of cell wall components. Involved in the arabinosylation of extensin proteins in root hair cells. Extensins are structural glycoproteins present in cell walls and its arabinosylation is important for root hair cell development. The polypeptide is Arabinosyltransferase RRA2 (Arabidopsis thaliana (Mouse-ear cress)).